Consider the following 455-residue polypeptide: Probable carboxypeptidase MCYG_07204 (455 aa).

A signal peptide spans 1–21; that stretch reads MQKTYLLALLVSSLASVRSLA. A glycan (N-linked (GlcNAc...) asparagine) is linked at Asn-93. Asp-170 provides a ligand contact to Zn(2+). Glu-202 acts as the Proton acceptor in catalysis. Glu-203 contributes to the Zn(2+) binding site. The N-linked (GlcNAc...) asparagine glycan is linked to Asn-390.

Belongs to the peptidase M20A family. The cofactor is Zn(2+).

It is found in the secreted. The polypeptide is Probable carboxypeptidase MCYG_07204 (Arthroderma otae (strain ATCC MYA-4605 / CBS 113480) (Microsporum canis)).